The primary structure comprises 345 residues: Isopentenyl-diphosphate delta-isomerase (345 aa).

Residue 14 to 15 participates in substrate binding; sequence RK. Residues S71, 72 to 74, S102, and N130 each bind FMN; that span reads SMT. Position 102–104 (102–104) interacts with substrate; sequence SMR. Q165 contributes to the substrate binding site. E166 is a Mg(2+) binding site. Residues K197, T227, 277-279, and 298-299 each bind FMN; these read GLK and AG.

It belongs to the IPP isomerase type 2 family. In terms of assembly, homooctamer. Dimer of tetramers. FMN is required as a cofactor. The cofactor is NADPH. It depends on Mg(2+) as a cofactor.

The protein localises to the cytoplasm. The enzyme catalyses isopentenyl diphosphate = dimethylallyl diphosphate. In terms of biological role, involved in the biosynthesis of isoprenoids. Catalyzes the 1,3-allylic rearrangement of the homoallylic substrate isopentenyl (IPP) to its allylic isomer, dimethylallyl diphosphate (DMAPP). The protein is Isopentenyl-diphosphate delta-isomerase of Rickettsia felis (strain ATCC VR-1525 / URRWXCal2) (Rickettsia azadi).